The chain runs to 205 residues: Pectinesterase inhibitor 3 (205 aa).

Residues 1–25 (MAPTQNLFLVAIAFAVIFTASTVHG) form the signal peptide. 2 disulfides stabilise this stretch: Cys38–Cys47 and Cys104–Cys156.

This sequence belongs to the PMEI family. As to expression, expressed in apical meristem.

Its subcellular location is the secreted. It localises to the extracellular space. It is found in the apoplast. Its function is as follows. Pectin methylesterase (PME) inhibitor that can target PMEs (e.g. PME2 and PME3) in a pH-dependent manner, mainly in slightly acidic conditions (pH 6.3 and 5.0) but not at pH 7.5; this processus relies on changes in the protonation of amino acids involved in intermolecular and intramolecular interactions. Regulates de-methylesterification of pectins in the apical meristem and affects primordia formation and phyllotactic patterning. This chain is Pectinesterase inhibitor 3, found in Arabidopsis thaliana (Mouse-ear cress).